The following is a 618-amino-acid chain: Chaperone protein DnaK (618 aa).

Position 175 is a phosphothreonine; by autocatalysis (Thr175). The interval 576–618 is disordered; that stretch reads SQNAEPGADGGANSGANPGGTTGNTDTKDDNVVDAEYKVDDDK. A compositionally biased stretch (gly residues) spans 583–597; that stretch reads ADGGANSGANPGGTT. Positions 601 to 618 are enriched in basic and acidic residues; that stretch reads DTKDDNVVDAEYKVDDDK.

Belongs to the heat shock protein 70 family.

Functionally, acts as a chaperone. The sequence is that of Chaperone protein DnaK from Clostridium kluyveri (strain NBRC 12016).